The chain runs to 397 residues: Protein RecA (397 aa).

The tract at residues 1–23 (MALETKPAKDPAAEDKHELDPKR) is disordered. 83–90 (GPESSGKT) is an ATP binding site.

It belongs to the RecA family.

The protein localises to the cytoplasm. In terms of biological role, can catalyze the hydrolysis of ATP in the presence of single-stranded DNA, the ATP-dependent uptake of single-stranded DNA by duplex DNA, and the ATP-dependent hybridization of homologous single-stranded DNAs. It interacts with LexA causing its activation and leading to its autocatalytic cleavage. The chain is Protein RecA from Bifidobacterium longum (strain NCC 2705).